The sequence spans 656 residues: MTGAKRKKKSMLWSKMHTPQCEDIIQWCRRRLPILDWAPHYNLKENLLPDTVSGIMLAVQQVTQGLAFAVLSSVHPVFGLYGSLFPAIIYAIFGMGHHVATGTFALTSLISANAVERIVPQNMQNLTTQSNTSVLGLSDFEMQRIHVAAAVSFLGGVIQVAMFVLQLGSATFVVTEPVISAMTTGAATHVVTSQVKYLLGMKMPYISGPLGFFYIYAYVFENIKSVRLEALLLSLLSIVVLVLVKELNEQFKRKIKVVLPVDLVLIIAASFACYCTNMENTYGLEVVGHIPQGIPSPRAPPMNILSAVITEAFGVALVGYVASLALAQGSAKKFKYSIDDNQEFLAHGLSNIVSSFFFCIPSAAAMGRTAGLYSTGAKTQVACLISCIFVLIVIYAIGPLLYWLPMCVLASIIVVGLKGMLIQFRDLKKYWNVDKIDWGIWVSTYVFTICFAANVGLLFGVVCTIAIVIGRFPRAMTVSIKNMKEMEFKVKTEMDSETLQQVKIISINNPLVFLNAKKFYTDLMNMIQKENACNQPLDDISKCEQNTLLNSLSNGNCNEEASQSCPNEKCYLILDCSGFTFFDYSGVSMLVEVYMDCKGRSVDVLLAHCTASLIKAMTYYGNLDSEKPIFFESVSAAISHIHSNKNLSKLSDHSEV.

Topologically, residues 1–75 (MTGAKRKKKS…LAFAVLSSVH (75 aa)) are cytoplasmic. A helical membrane pass occupies residues 76–96 (PVFGLYGSLFPAIIYAIFGMG). Over 97 to 144 (HHVATGTFALTSLISANAVERIVPQNMQNLTTQSNTSVLGLSDFEMQR) the chain is Extracellular. A helical membrane pass occupies residues 145-165 (IHVAAAVSFLGGVIQVAMFVL). A topological domain (cytoplasmic) is located at residue Gln166. A helical transmembrane segment spans residues 167-187 (LGSATFVVTEPVISAMTTGAA). Over 188–202 (THVVTSQVKYLLGMK) the chain is Extracellular. A helical transmembrane segment spans residues 203 to 223 (MPYISGPLGFFYIYAYVFENI). At 224 to 227 (KSVR) the chain is on the cytoplasmic side. A helical membrane pass occupies residues 228 to 248 (LEALLLSLLSIVVLVLVKELN). The Extracellular segment spans residues 249 to 254 (EQFKRK). The chain crosses the membrane as a helical span at residues 255–275 (IKVVLPVDLVLIIAASFACYC). Residues 276-306 (TNMENTYGLEVVGHIPQGIPSPRAPPMNILS) are Cytoplasmic-facing. A helical membrane pass occupies residues 307-327 (AVITEAFGVALVGYVASLALA). Residues 328–343 (QGSAKKFKYSIDDNQE) lie on the Extracellular side of the membrane. Residues 344-364 (FLAHGLSNIVSSFFFCIPSAA) form a helical membrane-spanning segment. At 365-383 (AMGRTAGLYSTGAKTQVAC) the chain is on the cytoplasmic side. The next 2 membrane-spanning stretches (helical) occupy residues 384–404 (LISCIFVLIVIYAIGPLLYWL) and 405–425 (PMCVLASIIVVGLKGMLIQFR). The Extracellular portion of the chain corresponds to 426–448 (DLKKYWNVDKIDWGIWVSTYVFT). The helical transmembrane segment at 449-469 (ICFAANVGLLFGVVCTIAIVI) threads the bilayer. Residues 470-656 (GRFPRAMTVS…LSKLSDHSEV (187 aa)) are Cytoplasmic-facing. The region spanning 492-641 (TEMDSETLQQ…ESVSAAISHI (150 aa)) is the STAS domain. The membrane targeting stretch occupies residues 641–656 (IHSNKNLSKLSDHSEV).

This sequence belongs to the SLC26A/SulP transporter (TC 2.A.53) family. In terms of tissue distribution, expressed in the thyroid gland (at protein level). Expressed in tonsillar high endothelial venule endothelial cells (HEVEC), placenta and in testis, expressed in a subgroup of basal cells in the epididymal ducts.

Its subcellular location is the basolateral cell membrane. The protein resides in the recycling endosome membrane. The protein localises to the apical cell membrane. It localises to the lateral cell membrane. The enzyme catalyses chloride(in) = chloride(out). It carries out the reaction iodide(out) = iodide(in). The catalysed reaction is bromide(in) = bromide(out). It catalyses the reaction oxalate(in) = oxalate(out). The enzyme catalyses nitrate(in) = nitrate(out). It carries out the reaction sulfate(in) = sulfate(out). The catalysed reaction is thiocyanate(in) = thiocyanate(out). It catalyses the reaction D-gluconate(in) = D-gluconate(out). The enzyme catalyses hydrogencarbonate(in) = hydrogencarbonate(out). It carries out the reaction hydrogencarbonate(in) + chloride(out) = hydrogencarbonate(out) + chloride(in). Its activity is regulated as follows. Is active at both alkaline and acidic pH. Activity is inhibited by 4,4'-Di-isothiocyanatostilbene-2,2'-disulfonic acid (DIDS - an inhibitor of several anion channels and transporters). Acts as an anion channel mediating the transport of chloride, sulfate and oxalate ions. Mediates the transport of bromide, iodide, nitrate, gluconate, thiocyanate and bicarbonate ions. Its permeability towards bicarbonate is weak and increases when pH is above 7. Mediates thiocyanate transport in retinal pigment epithelium cells. Mediates iodide transport in the thyroid gland, playing an important role in the synthesis of thyroid hormones and the maintenance of thyroid function. Although it is an anion channel, according to PubMed:12736153 and PubMed:32119864 it has been shown to exhibit chloride-bicarbonate exchanger activity. The chain is Anion exchange transporter from Homo sapiens (Human).